The primary structure comprises 558 residues: Laccase-4 (558 aa).

The N-terminal stretch at 1–24 (MGSHMVWFLFLVSFFSVFPAPSES) is a signal peptide. Plastocyanin-like domains are found at residues 32 to 148 (NVVM…PKRG) and 158 to 308 (NEKV…YSGT). Residues N37 and N78 are each glycosylated (N-linked (GlcNAc...) asparagine). Positions 82 and 84 each coordinate Cu cation. N114 carries N-linked (GlcNAc...) asparagine glycosylation. Positions 127 and 129 each coordinate Cu cation. N187, N296, N323, N330, N373, N383, N400, N418, and N441 each carry an N-linked (GlcNAc...) asparagine glycan. The Plastocyanin-like 3 domain occupies 408–542 (DFPKNPPHVF…KMAFLVENGK (135 aa)). Cu cation-binding residues include H459, H462, and H464. N479 carries N-linked (GlcNAc...) asparagine glycosylation. The Cu cation site is built by H521, C522, H523, and H527. The N-linked (GlcNAc...) asparagine glycan is linked to N545.

It belongs to the multicopper oxidase family. Requires Cu cation as cofactor. Ubiquitous, with higher levels in the inflorescence stem.

Its subcellular location is the secreted. It localises to the extracellular space. The protein resides in the apoplast. It carries out the reaction 4 hydroquinone + O2 = 4 benzosemiquinone + 2 H2O. In terms of biological role, lignin degradation and detoxification of lignin-derived products. Required for secondary xylem cell wall lignification. The polypeptide is Laccase-4 (IRX12) (Arabidopsis thaliana (Mouse-ear cress)).